A 179-amino-acid chain; its full sequence is MAKLHDKYKETVIAELSKKFGYTSVMQVPRIEKITLNMGVGEAVADKKVMEHALRDMTAIAGQKPVVTVARKSVAGFKIRDGYPIGCKVTLRGERMWEFLERLVDIAIPRIRDFRGLSAKSFDGRGNYAMGVREQIIFPEIDYDKIDKIRGMDIVITTTAKNDEEGRALLDAFNFPFKK.

Belongs to the universal ribosomal protein uL5 family. In terms of assembly, part of the 50S ribosomal subunit; part of the 5S rRNA/L5/L18/L25 subcomplex. Contacts the 5S rRNA and the P site tRNA. Forms a bridge to the 30S subunit in the 70S ribosome.

Functionally, this is one of the proteins that bind and probably mediate the attachment of the 5S RNA into the large ribosomal subunit, where it forms part of the central protuberance. In the 70S ribosome it contacts protein S13 of the 30S subunit (bridge B1b), connecting the 2 subunits; this bridge is implicated in subunit movement. Contacts the P site tRNA; the 5S rRNA and some of its associated proteins might help stabilize positioning of ribosome-bound tRNAs. This Shewanella loihica (strain ATCC BAA-1088 / PV-4) protein is Large ribosomal subunit protein uL5.